The sequence spans 250 residues: Testis-expressed protein 101 (250 aa).

An N-terminal signal peptide occupies residues 1 to 25 (MGACRIQYILLVFLLIASHWTLVQN). N-linked (GlcNAc...) asparagine glycosylation is found at Asn-45, Asn-110, Asn-134, and Asn-160. In terms of domain architecture, UPAR/Ly6 spans 141 to 215 (CPTCLALEPC…VKETCSYQSF (75 aa)). Residue Gly-224 is the site of GPI-anchor amidated glycine attachment. Positions 225-250 (ASWMPTSLWVLELLLPALSLPLIYFP) are cleaved as a propeptide — removed in mature form.

In terms of assembly, interacts with VAMP3. Interacts with LY6K. Interacts with DPEP3; co-localized on the cell surface of spermatocytes, spermatids, and testicular spermatozoa, co-localized only in cytoplasmic droplets of caput and corpus epididymal sperm. Interacts with ADAM5. Post-translationally, N-glycosylated; by high mannose and/or biantennary complex and/or certain types of hybrid oligosaccharides; possesses different oligosaccharides chains according to its subcellular localization in the testis. In terms of processing, sheds from membrane raft by ACE and released from the cell surface of epididymal sperm while it passes through the caput epididymis leading to disappearance of TEX101 on spermatozoa; is essential to produce fertile spermatozoa. Detected in testis.

The protein localises to the cell membrane. It localises to the membrane raft. It is found in the cytoplasmic vesicle. The protein resides in the secretory vesicle. Its subcellular location is the acrosome. The protein localises to the secreted. In terms of biological role, plays a role in fertilization by controlling binding of sperm to zona pellucida and migration of spermatozoa into the oviduct. May play a role in signal transduction and promote protein tyrosine phosphorylation. This is Testis-expressed protein 101 from Rattus norvegicus (Rat).